Reading from the N-terminus, the 445-residue chain is Probable glycine dehydrogenase (decarboxylating) subunit 1 (445 aa).

It belongs to the GcvP family. N-terminal subunit subfamily. As to quaternary structure, the glycine cleavage system is composed of four proteins: P, T, L and H. In this organism, the P 'protein' is a heterodimer of two subunits.

It carries out the reaction N(6)-[(R)-lipoyl]-L-lysyl-[glycine-cleavage complex H protein] + glycine + H(+) = N(6)-[(R)-S(8)-aminomethyldihydrolipoyl]-L-lysyl-[glycine-cleavage complex H protein] + CO2. Functionally, the glycine cleavage system catalyzes the degradation of glycine. The P protein binds the alpha-amino group of glycine through its pyridoxal phosphate cofactor; CO(2) is released and the remaining methylamine moiety is then transferred to the lipoamide cofactor of the H protein. The polypeptide is Probable glycine dehydrogenase (decarboxylating) subunit 1 (Citrifermentans bemidjiense (strain ATCC BAA-1014 / DSM 16622 / JCM 12645 / Bem) (Geobacter bemidjiensis)).